A 253-amino-acid chain; its full sequence is Imidazole glycerol phosphate synthase subunit HisF (253 aa).

Residues D11 and D130 contribute to the active site.

This sequence belongs to the HisA/HisF family. As to quaternary structure, heterodimer of HisH and HisF.

Its subcellular location is the cytoplasm. It carries out the reaction 5-[(5-phospho-1-deoxy-D-ribulos-1-ylimino)methylamino]-1-(5-phospho-beta-D-ribosyl)imidazole-4-carboxamide + L-glutamine = D-erythro-1-(imidazol-4-yl)glycerol 3-phosphate + 5-amino-1-(5-phospho-beta-D-ribosyl)imidazole-4-carboxamide + L-glutamate + H(+). It participates in amino-acid biosynthesis; L-histidine biosynthesis; L-histidine from 5-phospho-alpha-D-ribose 1-diphosphate: step 5/9. IGPS catalyzes the conversion of PRFAR and glutamine to IGP, AICAR and glutamate. The HisF subunit catalyzes the cyclization activity that produces IGP and AICAR from PRFAR using the ammonia provided by the HisH subunit. This is Imidazole glycerol phosphate synthase subunit HisF from Lysinibacillus sphaericus (strain C3-41).